Consider the following 597-residue polypeptide: Aspartate--tRNA(Asp/Asn) ligase (597 aa).

Residue E170 participates in L-aspartate binding. An aspartate region spans residues 194–197; that stretch reads QLFK. Residue R216 participates in L-aspartate binding. Residues 216–218 and Q225 each bind ATP; that span reads RDE. H448 contacts L-aspartate. Position 482 (E482) interacts with ATP. R489 contributes to the L-aspartate binding site. An ATP-binding site is contributed by 534–537; sequence GWDR. Residues 558-597 are disordered; it reads GGGVDPLTDAPAPITAAQRKESGIDAKPEKAEKAGKPADA. Residues 575-597 show a composition bias toward basic and acidic residues; sequence QRKESGIDAKPEKAEKAGKPADA.

It belongs to the class-II aminoacyl-tRNA synthetase family. Type 1 subfamily. Homodimer.

Its subcellular location is the cytoplasm. It catalyses the reaction tRNA(Asx) + L-aspartate + ATP = L-aspartyl-tRNA(Asx) + AMP + diphosphate. In terms of biological role, aspartyl-tRNA synthetase with relaxed tRNA specificity since it is able to aspartylate not only its cognate tRNA(Asp) but also tRNA(Asn). Reaction proceeds in two steps: L-aspartate is first activated by ATP to form Asp-AMP and then transferred to the acceptor end of tRNA(Asp/Asn). The sequence is that of Aspartate--tRNA(Asp/Asn) ligase from Mycobacteroides abscessus (strain ATCC 19977 / DSM 44196 / CCUG 20993 / CIP 104536 / JCM 13569 / NCTC 13031 / TMC 1543 / L948) (Mycobacterium abscessus).